Here is a 46-residue protein sequence, read N- to C-terminus: Light-harvesting protein B-800/850 beta 1 chain (46 aa).

Residues 2–19 (AERSLSGLTEEEAIAVHD) are Cytoplasmic-facing. A bacteriochlorophyll contacts are provided by histidine 18 and histidine 36. Residues 20–42 (QFKTTFSAFIILAAVAHVLVWVW) form a helical membrane-spanning segment. Over 43–46 (KPWF) the chain is Periplasmic.

This sequence belongs to the antenna complex beta subunit family. The core complex is formed by different alpha and beta chains, binding bacteriochlorophyll molecules, and arranged most probably in tetrameric structures disposed around the reaction center.

The protein localises to the cell inner membrane. Antenna complexes are light-harvesting systems, which transfer the excitation energy to the reaction centers. The polypeptide is Light-harvesting protein B-800/850 beta 1 chain (B1) (Magnetospirillum molischianum (Rhodospirillum molischianum)).